Consider the following 597-residue polypeptide: Arginine--tRNA ligase (597 aa).

Residues 125–135 carry the 'HIGH' region motif; it reads PNTNKPLHLGH.

Belongs to the class-I aminoacyl-tRNA synthetase family. As to quaternary structure, monomer.

The protein resides in the cytoplasm. It catalyses the reaction tRNA(Arg) + L-arginine + ATP = L-arginyl-tRNA(Arg) + AMP + diphosphate. The chain is Arginine--tRNA ligase from Porphyromonas gingivalis (strain ATCC 33277 / DSM 20709 / CIP 103683 / JCM 12257 / NCTC 11834 / 2561).